We begin with the raw amino-acid sequence, 56 residues long: uncharacterized protein (56 aa).

The disordered stretch occupies residues 15–56; it reads SIGNISSGNINNSIGNSSSSGCDDVFNNSTNNNNNNNNNNNK.

This is an uncharacterized protein from Dictyostelium discoideum (Social amoeba).